The following is a 737-amino-acid chain: Polyribonucleotide nucleotidyltransferase (737 aa).

Residues Asp-489 and Asp-495 each contribute to the Mg(2+) site. A KH domain is found at 556–615 (PKIDTIKIDVDKIKIVIGKGGETIDKIIAETGVKIDIDEEGNVSIYSSDQDAINRAKEII). Residues 625–693 (DEVYRAKVVR…EKGRIDASMK (69 aa)) enclose the S1 motif domain. Residues 691 to 737 (SMKALLPRPPKPEHDEKGEKSERPHRPRHQKDHKPKKEFTETPKDSE) are disordered. Positions 700–714 (PKPEHDEKGEKSERP) are enriched in basic and acidic residues. Over residues 715–724 (HRPRHQKDHK) the composition is skewed to basic residues. Residues 725-737 (PKKEFTETPKDSE) show a composition bias toward basic and acidic residues.

It belongs to the polyribonucleotide nucleotidyltransferase family. Requires Mg(2+) as cofactor.

The protein resides in the cytoplasm. It catalyses the reaction RNA(n+1) + phosphate = RNA(n) + a ribonucleoside 5'-diphosphate. Involved in mRNA degradation. Catalyzes the phosphorolysis of single-stranded polyribonucleotides processively in the 3'- to 5'-direction. In Streptococcus pneumoniae (strain JJA), this protein is Polyribonucleotide nucleotidyltransferase.